The primary structure comprises 479 residues: Cysteine--tRNA ligase (479 aa).

Zn(2+) is bound at residue Cys-28. The 'HIGH' region motif lies at 30–40 (PTVYDHAHLGH). Residues Cys-207, His-232, and Glu-236 each coordinate Zn(2+). Residues 264 to 268 (KMSKS) carry the 'KMSKS' region motif. Residue Lys-267 participates in ATP binding.

It belongs to the class-I aminoacyl-tRNA synthetase family. It depends on Zn(2+) as a cofactor.

The protein resides in the cytoplasm. The catalysed reaction is tRNA(Cys) + L-cysteine + ATP = L-cysteinyl-tRNA(Cys) + AMP + diphosphate. This chain is Cysteine--tRNA ligase, found in Methanococcus aeolicus (strain ATCC BAA-1280 / DSM 17508 / OCM 812 / Nankai-3).